The following is a 478-amino-acid chain: Vitronectin (478 aa).

The N-terminal stretch at 1–19 (MAPLRPLLILALLAWVALA) is a signal peptide. The 44-residue stretch at 20–63 (DQESCKGRCTEGFNVDKKCQCDELCSYYQSCCTDYTAECKPQVT) folds into the SMB domain. 7 disulfide bridges follow: Cys-24–Cys-28, Cys-24–Cys-40, Cys-28–Cys-58, Cys-38–Cys-40, Cys-38–Cys-51, Cys-44–Cys-50, and Cys-51–Cys-58. A Cell attachment site motif is present at residues 64–66 (RGD). The residue at position 69 (Thr-69) is a Phosphothreonine; by CK2; in vitro. Tyr-75 is subject to Sulfotyrosine. Thr-76 is subject to Phosphothreonine; by CK2; in vitro. The residue at position 78 (Tyr-78) is a Sulfotyrosine. Residue Asn-86 is glycosylated (N-linked (GlcNAc...) (complex) asparagine). The segment at 91–158 (EQVGGPSLTS…PPAEEELCSG (68 aa)) is disordered. Residues 97–112 (SLTSDLQAQSKGNPEQ) show a composition bias toward polar residues. 2 positions are modified to phosphoserine: Ser-130 and Ser-137. Over residues 133 to 143 (EGIDSRPETLH) the composition is skewed to basic and acidic residues. 3 Hemopexin repeats span residues 158–202 (GKPF…VWGI), 203–250 (EGPI…FDGI), and 251–305 (PDNV…FEHF). Residue Asn-169 is glycosylated (N-linked (GlcNAc...) asparagine). Asn-242 is a glycosylation site (N-linked (GlcNAc...) (complex) asparagine). Sulfotyrosine is present on Tyr-282. Cys-293 and Cys-430 are oxidised to a cystine. At Ser-312 the chain carries Phosphoserine. The tract at residues 362-395 (RPSLAKKQRFRHRNRKGYRSQRGHSRGRNQNSRR) is heparin-binding. Residues 364-398 (SLAKKQRFRHRNRKGYRSQRGHSRGRNQNSRRPSR) are disordered. Positions 365–388 (LAKKQRFRHRNRKGYRSQRGHSRG) are enriched in basic residues. Ser-397 bears the Phosphoserine; by PKA mark. Sulfotyrosine occurs at positions 417 and 420. A Hemopexin 4 repeat occupies 419–472 (DYRMDWLVPATCEPIQSVFFFSGDKYYRVNLRTRRVDTVDPPYPRSIAQYWLGC).

Exists in two forms: a single chain 75 kDa form (V75) and a clipped form composed of two chains (65 kDa and 10 kDa) (V65+V10) which are held together by a disulfide bond. Interacts with SERPINE1/PAI1, insulin and C1QBP. As to quaternary structure, (Microbial infection) Interacts (via hemopexin repeat 2) with P.falciparum (isolate CDC / Honduras) SERA5 P47 (via C-terminus); may form heterotetramers of two VTN and SERA5 P47 heterodimers; the interaction may protect merozoites from phagocytosis by host monocytes; VTN glycosylation appears to be dispensable for the interaction. Post-translationally, sulfated on tyrosine residues. N- and O-glycosylated. In terms of processing, phosphorylation on Thr-69 and Thr-76 favors cell adhesion and spreading. Post-translationally, it has been suggested that the active SMB domain may be permitted considerable disulfide bond heterogeneity or variability, thus two alternate disulfide patterns based on 3D structures are described with 1 disulfide bond conserved in both. Phosphorylation sites are present in the extracellular medium. In terms of tissue distribution, expressed in the retina pigment epithelium (at protein level). Expressed in plasma (at protein level). Expressed in serum (at protein level).

Its subcellular location is the secreted. It localises to the extracellular space. The protein resides in the parasitophorous vacuole. Vitronectin is a cell adhesion and spreading factor found in serum and tissues. Vitronectin interact with glycosaminoglycans and proteoglycans. Is recognized by certain members of the integrin family and serves as a cell-to-substrate adhesion molecule. Inhibitor of the membrane-damaging effect of the terminal cytolytic complement pathway. In terms of biological role, somatomedin-B is a growth hormone-dependent serum factor with protease-inhibiting activity. The protein is Vitronectin (VTN) of Homo sapiens (Human).